A 309-amino-acid polypeptide reads, in one-letter code: ATP synthase gamma chain (309 aa).

It belongs to the ATPase gamma chain family. As to quaternary structure, F-type ATPases have 2 components, CF(1) - the catalytic core - and CF(0) - the membrane proton channel. CF(1) has five subunits: alpha(3), beta(3), gamma(1), delta(1), epsilon(1). CF(0) has three main subunits: a, b and c.

It is found in the cell membrane. In terms of biological role, produces ATP from ADP in the presence of a proton gradient across the membrane. The gamma chain is believed to be important in regulating ATPase activity and the flow of protons through the CF(0) complex. The polypeptide is ATP synthase gamma chain (Salinispora arenicola (strain CNS-205)).